We begin with the raw amino-acid sequence, 188 residues long: Elongation factor P (188 aa).

It belongs to the elongation factor P family.

It is found in the cytoplasm. Its pathway is protein biosynthesis; polypeptide chain elongation. In terms of biological role, involved in peptide bond synthesis. Stimulates efficient translation and peptide-bond synthesis on native or reconstituted 70S ribosomes in vitro. Probably functions indirectly by altering the affinity of the ribosome for aminoacyl-tRNA, thus increasing their reactivity as acceptors for peptidyl transferase. In Rickettsia akari (strain Hartford), this protein is Elongation factor P.